Consider the following 449-residue polypeptide: MSGAPVVRFAPSPTGSLHVGNARAALFNFLFARKNSGKFMLRMDDTDDERSTVEFAAGIEEDLTWLGLRHDLFARQSDRLAAYEAAAAKLKADGRLYPAYETAAELDRKRKRQMARGLPPVYDRAALALTDEDRAKLEAEGRKPHWRFRLDRVHTAFDDLVQGAVEVDGASLSDPVLIREDGRFLYTLPSVVDDIDFAVTHVIRGSDHITNTGVQIQIIRALGAEPPVYAHYSLLNGPEGKPLSKRDDAARFSLRALRDAGFEPMALNSLLARLGTPDAVEPCLSLDELAARFDISRLGRADIRFDPADLAKVNTACLHLMSYEEAKPRLAALGCDLGEAFWEAIKPNLILFSDAADWARVVEGPVEPVIENPDFAAAAAAALPPEPWDESTWALWTDAVKQATGAKGKALFMPLRLALTGLTHGPELKNLLPLIGRERASARLGGLTR.

Residues 11–21 (PSPTGSLHVGN) carry the 'HIGH' region motif. The short motif at 242-246 (PLSKR) is the 'KMSKS' region element. Lys245 is an ATP binding site.

It belongs to the class-I aminoacyl-tRNA synthetase family. Glutamate--tRNA ligase type 1 subfamily. In terms of assembly, monomer.

Its subcellular location is the cytoplasm. It catalyses the reaction tRNA(Glu) + L-glutamate + ATP = L-glutamyl-tRNA(Glu) + AMP + diphosphate. Functionally, catalyzes the attachment of glutamate to tRNA(Glu) in a two-step reaction: glutamate is first activated by ATP to form Glu-AMP and then transferred to the acceptor end of tRNA(Glu). This Parvibaculum lavamentivorans (strain DS-1 / DSM 13023 / NCIMB 13966) protein is Glutamate--tRNA ligase 1.